Reading from the N-terminus, the 60-residue chain is Large ribosomal subunit protein bL32 (60 aa).

The segment covering 1–22 (MAVPKKKTSKSRRDMRRSHHAL) has biased composition (basic residues). The interval 1 to 27 (MAVPKKKTSKSRRDMRRSHHALKGSAY) is disordered.

Belongs to the bacterial ribosomal protein bL32 family.

In Rhodospirillum centenum (strain ATCC 51521 / SW), this protein is Large ribosomal subunit protein bL32.